The sequence spans 105 residues: Heat shock protein HspQ (105 aa).

Belongs to the HspQ family.

It is found in the cytoplasm. Involved in the degradation of certain denaturated proteins, including DnaA, during heat shock stress. The sequence is that of Heat shock protein HspQ from Salmonella choleraesuis (strain SC-B67).